Consider the following 72-residue polypeptide: Translation initiation factor IF-1 (72 aa).

The S1-like domain occupies 2-72 (AKEDCIEMQG…SKGRIIFRSR (71 aa)).

It belongs to the IF-1 family. In terms of assembly, component of the 30S ribosomal translation pre-initiation complex which assembles on the 30S ribosome in the order IF-2 and IF-3, IF-1 and N-formylmethionyl-tRNA(fMet); mRNA recruitment can occur at any time during PIC assembly.

The protein resides in the cytoplasm. In terms of biological role, one of the essential components for the initiation of protein synthesis. Stabilizes the binding of IF-2 and IF-3 on the 30S subunit to which N-formylmethionyl-tRNA(fMet) subsequently binds. Helps modulate mRNA selection, yielding the 30S pre-initiation complex (PIC). Upon addition of the 50S ribosomal subunit IF-1, IF-2 and IF-3 are released leaving the mature 70S translation initiation complex. The sequence is that of Translation initiation factor IF-1 from Haemophilus influenzae (strain ATCC 51907 / DSM 11121 / KW20 / Rd).